Consider the following 255-residue polypeptide: Small ribosomal subunit protein eS1 (255 aa).

The residue at position 2 (alanine 2) is an N-acetylalanine; partial.

The protein belongs to the eukaryotic ribosomal protein eS1 family. As to quaternary structure, component of the small ribosomal subunit. Mature ribosomes consist of a small (40S) and a large (60S) subunit. The 40S subunit contains about 33 different proteins and 1 molecule of RNA (18S). The 60S subunit contains about 49 different proteins and 3 molecules of RNA (25S, 5.8S and 5S).

The protein resides in the cytoplasm. The protein is Small ribosomal subunit protein eS1 of Kluyveromyces lactis (strain ATCC 8585 / CBS 2359 / DSM 70799 / NBRC 1267 / NRRL Y-1140 / WM37) (Yeast).